Reading from the N-terminus, the 630-residue chain is Vacuolar protein 8 (630 aa).

Residue glycine 2 is the site of N-myristoyl glycine attachment. 9 ARM repeats span residues 74-115, 117-156, 158-197, 199-238, 242-281, 283-322, 324-364, 408-447, and 456-495; these read EITE…NLAV, AENK…NLAT, DENK…NMTH, DENR…NIAV, NRKK…NLAS, SKYQ…NVSI, PANE…NLAA, DDLK…NLSS, and FNAV…QLLE. Disordered regions lie at residues 519-558 and 572-630; these read AKSP…EGEG and EVGE…GRDR. The segment covering 543–558 has biased composition (acidic residues); the sequence is SEDEFEDGLTDQEGEG. Residues 598 to 607 are compositionally biased toward polar residues; sequence GQGQTSQVGS.

The protein belongs to the beta-catenin family.

It is found in the vacuole membrane. Functionally, functions in both vacuole inheritance and protein targeting from the cytoplasm to vacuole. This is Vacuolar protein 8 (VAC8) from Cryptococcus neoformans var. neoformans serotype D (strain B-3501A) (Filobasidiella neoformans).